Here is a 1347-residue protein sequence, read N- to C-terminus: Protocadherin-11 X-linked (1347 aa).

The N-terminal stretch at 1–23 (MDLLSGTYIFAVLLACVVFHSGA) is a signal peptide. Over 24–812 (QEKNYTIREE…VSSPTNDYVK (789 aa)) the chain is Extracellular. 7 Cadherin domains span residues 26 to 139 (KNYT…APLF), 140 to 249 (PATV…HPVF), 250 to 355 (KETE…VPSI), 362 to 466 (NPVN…APVF), 467 to 570 (TQSF…SPVF), 571 to 673 (THNE…KPVF), and 677 to 795 (PSNY…APVT). 3 N-linked (GlcNAc...) asparagine glycosylation sites follow: Asn27, Asn48, and Asn54. Asn344 is a glycosylation site (N-linked (GlcNAc...) asparagine). A glycan (N-linked (GlcNAc...) asparagine) is linked at Asn553. Asn773 is a glycosylation site (N-linked (GlcNAc...) asparagine). The helical transmembrane segment at 813 to 833 (ILVAAVAGTITVVVVIFITAV) threads the bilayer. Topologically, residues 834-1347 (VRCRQAPHLK…DSPIMEEHPL (514 aa)) are cytoplasmic. Disordered stretches follow at residues 1057-1091 (LPEGSQESSSDGGLGDHDAGSLTSTSHGLPLGYPQ), 1097-1116 (RATPSNRTEGDGNSDPESTF), and 1326-1347 (FTPRQQARPSRGDSPIMEEHPL).

It localises to the cell membrane. Functionally, potential calcium-dependent cell-adhesion protein. The polypeptide is Protocadherin-11 X-linked (PCDH11X) (Gorilla gorilla gorilla (Western lowland gorilla)).